Here is a 191-residue protein sequence, read N- to C-terminus: 3-isopropylmalate dehydratase small subunit (191 aa).

It belongs to the LeuD family. LeuD type 1 subfamily. In terms of assembly, heterodimer of LeuC and LeuD.

The catalysed reaction is (2R,3S)-3-isopropylmalate = (2S)-2-isopropylmalate. It participates in amino-acid biosynthesis; L-leucine biosynthesis; L-leucine from 3-methyl-2-oxobutanoate: step 2/4. In terms of biological role, catalyzes the isomerization between 2-isopropylmalate and 3-isopropylmalate, via the formation of 2-isopropylmaleate. The polypeptide is 3-isopropylmalate dehydratase small subunit (Staphylococcus haemolyticus (strain JCSC1435)).